Reading from the N-terminus, the 44-residue chain is Defensin ARD1 (44 aa).

Intrachain disulfides connect Cys-7/Cys-32, Cys-18/Cys-40, and Cys-22/Cys-42.

It localises to the secreted. Functionally, possesses potent anti-fungal activity. This chain is Defensin ARD1, found in Archaeoprepona demophon (One-spotted leafwing butterfly).